The primary structure comprises 413 residues: MSPPAVDIKVSTDAPPKIVKALNLLGSTGSIGTQTLDIVAQYPDRFRVVGLAAGRNLERLIPQIRQFQPEIVSIADPEQLPELEAALADLPQKPQLVAGEAGIAAVAAYGDAEVVVTGIVGCAGLVPTIAAIKAGKDIALANKETLIAGGPVVLPLLQEYGVKLLPADSEHSAIFQCLQGVPEGGLRKIILTASGGAFRDWPVEKLAQVTVADALKHPNWSMGPKITVDSATLMNKGLEVIEAHYLFGMDYDNIEIVIHPQSIIHSLIELQDTSVLAQLGWPDMRLPLLYALSWPERIPTNWSPLDLVKAGDLTFRSPDHQKYPCMGLAYAAGRAGGAMPAVLNAANEQAVALFIAEAIAFLEIPRLIEMVCDRYSAQNIPNPTLEDILAADRWARATVQELAQRGVSPMVAL.

Residues T28, G29, S30, I31, G54, R55, N56, and N142 each coordinate NADPH. K143 contributes to the 1-deoxy-D-xylulose 5-phosphate binding site. Residue E144 participates in NADPH binding. D168 lines the Mn(2+) pocket. 1-deoxy-D-xylulose 5-phosphate-binding residues include S169, E170, S194, and H217. E170 contributes to the Mn(2+) binding site. G223 provides a ligand contact to NADPH. The 1-deoxy-D-xylulose 5-phosphate site is built by S230, N235, K236, and E239. E239 serves as a coordination point for Mn(2+).

The protein belongs to the DXR family. It depends on Mg(2+) as a cofactor. Mn(2+) is required as a cofactor.

It carries out the reaction 2-C-methyl-D-erythritol 4-phosphate + NADP(+) = 1-deoxy-D-xylulose 5-phosphate + NADPH + H(+). It functions in the pathway isoprenoid biosynthesis; isopentenyl diphosphate biosynthesis via DXP pathway; isopentenyl diphosphate from 1-deoxy-D-xylulose 5-phosphate: step 1/6. In terms of biological role, catalyzes the NADPH-dependent rearrangement and reduction of 1-deoxy-D-xylulose-5-phosphate (DXP) to 2-C-methyl-D-erythritol 4-phosphate (MEP). The chain is 1-deoxy-D-xylulose 5-phosphate reductoisomerase from Thermosynechococcus vestitus (strain NIES-2133 / IAM M-273 / BP-1).